Reading from the N-terminus, the 680-residue chain is Outer dense fiber protein 2 (680 aa).

The segment at 27-46 (LPKPSATSSQKSHKRGMKGD) is disordered. Residues S68 and S69 each carry the phosphoserine modification. Phosphothreonine is present on T87. Position 90 is a phosphoserine; by TSSK4 (S90). 2 positions are modified to phosphoserine: S101 and S104. A Phosphothreonine modification is found at T105. Phosphoserine is present on residues S110 and S124. K133 is covalently cross-linked (Glycyl lysine isopeptide (Lys-Gly) (interchain with G-Cter in SUMO2)). S134 bears the Phosphoserine mark. Positions 139-212 (QKGERQMAKR…MSKLVEAEMD (74 aa)) form a coiled coil. Residue T226 is modified to Phosphothreonine. Phosphoserine is present on S256. Coiled-coil stretches lie at residues 275–418 (KEDS…AEQL) and 456–630 (EIIV…SDLR). The interval 387–410 (KQKGDRDKESLKKAIRAQKERAEK) is disordered. S627 is modified (phosphoserine). Residues 632–680 (RETGGDQCPEYRVPTGDCQEGGGNPPVPAAARGENTGMWDPGKAVGERH) are disordered.

The protein belongs to the ODF2 family. Self-associates. Associates with microtubules and forms a fibrillar structure partially linked to the microtubule network. Interacts via its C-terminus with PLK1. Interacts with ODF1. Interacts with MARK4; the interaction is required for localization of ODF2 to centrioles. Interacts with TSSK4. Interacts with AKNA. Interacts with QRICH2. Interacts with CFAP58. Interacts with BBOF1. Interacts with CCDC38. Interacts with CCDC42. Tyrosine phosphorylated. Phosphorylated on Ser-90 by TSSK4.

The protein localises to the cytoplasm. It localises to the cytoskeleton. It is found in the microtubule organizing center. The protein resides in the centrosome. Its subcellular location is the cell projection. The protein localises to the cilium. It localises to the centriole. It is found in the spindle pole. The protein resides in the flagellum. Seems to be a major component of sperm tail outer dense fibers (ODF). ODFs are filamentous structures located on the outside of the axoneme in the midpiece and principal piece of the mammalian sperm tail and may help to maintain the passive elastic structures and elastic recoil of the sperm tail. May have a modulating influence on sperm motility. Functions as a general scaffold protein that is specifically localized at the distal/subdistal appendages of mother centrioles. Component of the centrosome matrix required for the localization of PLK1 and NIN to the centrosomes. Required for the formation and/or maintenance of normal CETN1 assembly. In Pongo abelii (Sumatran orangutan), this protein is Outer dense fiber protein 2 (ODF2).